Consider the following 336-residue polypeptide: MALKLGVIGTGAIGQDHIRRCSKTLVGSQVVAVTDINLEQAAKVVRDLDLGAEVYADGHALIAAPDVEAVLVCSWGPSHEEYVLAAIAAGKPVFCEKPLAVTAEGCRHIVEAEIASGRRLVQVGFMRPYDQGYRALKAAIDSGQIGEPLMLHCAHRNPSVGENYKTDMAITDTLIHELNVLRWLLDDDYVSVQVVFPRKTSKALAHLKDPQIVMLETVKGTRIDVEVFVNCQYGYDIQCEVVGETGIARLPEPSQVQLRSEAKLSNAILMDWKDRFIAAYDVELQDFIDGVKGGTLYGPSAWDGYAAAVAADACVLAQNTGAVVPITLAMRPVFYS.

This sequence belongs to the Gfo/Idh/MocA family. Homotetramer.

The catalysed reaction is myo-inositol + NAD(+) = scyllo-inosose + NADH + H(+). Involved in the oxidation of myo-inositol (MI) to 2-keto-myo-inositol (2KMI or 2-inosose). The sequence is that of Inositol 2-dehydrogenase from Pseudomonas syringae pv. syringae (strain B728a).